A 379-amino-acid polypeptide reads, in one-letter code: Cytochrome b (379 aa).

4 consecutive transmembrane segments (helical) span residues 33–53 (FGSLLGMCLVIQILTGLFLAM), 77–98 (WLIRYLHANGASMFFICLFIHV), 113–133 (WNIGIILFLTTMATAFVGYVL), and 178–198 (FFAFHFILPFIIAAFALVHLL). Residues H83 and H97 each coordinate heme b. Heme b is bound by residues H182 and H196. H201 contributes to the a ubiquinone binding site. A run of 4 helical transmembrane segments spans residues 226–246 (IKDLLGIFLLLLVLMILTLFF), 288–308 (LGGVLALILSILILAAFPLLN), 320–340 (VTQVIYWIFIANLLVLTWIGG), and 347–367 (FTMIGQIASITYFAIIIILIP).

It belongs to the cytochrome b family. The cytochrome bc1 complex contains 11 subunits: 3 respiratory subunits (MT-CYB, CYC1 and UQCRFS1), 2 core proteins (UQCRC1 and UQCRC2) and 6 low-molecular weight proteins (UQCRH/QCR6, UQCRB/QCR7, UQCRQ/QCR8, UQCR10/QCR9, UQCR11/QCR10 and a cleavage product of UQCRFS1). This cytochrome bc1 complex then forms a dimer. The cofactor is heme b.

The protein localises to the mitochondrion inner membrane. Its function is as follows. Component of the ubiquinol-cytochrome c reductase complex (complex III or cytochrome b-c1 complex) that is part of the mitochondrial respiratory chain. The b-c1 complex mediates electron transfer from ubiquinol to cytochrome c. Contributes to the generation of a proton gradient across the mitochondrial membrane that is then used for ATP synthesis. The polypeptide is Cytochrome b (MT-CYB) (Akodon subfuscus (Puno grass mouse)).